We begin with the raw amino-acid sequence, 241 residues long: Large ribosomal subunit protein uL3 (241 aa).

Disordered stretches follow at residues valine 139–glycine 164 and aspartate 215–valine 241. Residue glutamine 151 is modified to N5-methylglutamine. Residues alanine 225–valine 241 are compositionally biased toward low complexity.

This sequence belongs to the universal ribosomal protein uL3 family. Part of the 50S ribosomal subunit. Forms a cluster with proteins L14 and L19. Post-translationally, methylated by PrmB.

Its function is as follows. One of the primary rRNA binding proteins, it binds directly near the 3'-end of the 23S rRNA, where it nucleates assembly of the 50S subunit. The sequence is that of Large ribosomal subunit protein uL3 from Rhodopseudomonas palustris (strain HaA2).